The following is a 154-amino-acid chain: CASP-like protein ARALYDRAFT_485429 (154 aa).

The Cytoplasmic segment spans residues 1 to 12 (MENVPGSFGTSA). Residues 13-33 (SFALRFGQTIFSAASLIFMCF) traverse the membrane as a helical segment. Over 34–41 (DYDFYDFT) the chain is Extracellular. The chain crosses the membrane as a helical span at residues 42-62 (TFCYLATVMAIVTPWSILLAL). The Cytoplasmic portion of the chain corresponds to 63–81 (TDTYSVLVKLLPQELRVLS). A helical transmembrane segment spans residues 82-102 (IVFAGDFVLSFLSLGGACAVA). Topologically, residues 103-128 (SATELLASADGKICDGNLCIQYQVSA) are extracellular. A helical membrane pass occupies residues 129–149 (ALAFLCWFLLLASALFNFWSL). Residues 150–154 (PSLYY) are Cytoplasmic-facing.

It belongs to the Casparian strip membrane proteins (CASP) family. As to quaternary structure, homodimer and heterodimers.

It localises to the cell membrane. The polypeptide is CASP-like protein ARALYDRAFT_485429 (Arabidopsis lyrata subsp. lyrata (Lyre-leaved rock-cress)).